Consider the following 107-residue polypeptide: Nucleoid-associated protein BLi00029/BL02358 (107 aa).

The interval 1–27 (MRGGMGNMQKMMKQMQKMQKDMQKAQE) is disordered. Positions 8 to 17 (MQKMMKQMQK) are enriched in low complexity. The segment covering 18–27 (MQKDMQKAQE) has biased composition (basic and acidic residues).

Belongs to the YbaB/EbfC family. As to quaternary structure, homodimer.

Its subcellular location is the cytoplasm. It is found in the nucleoid. In terms of biological role, binds to DNA and alters its conformation. May be involved in regulation of gene expression, nucleoid organization and DNA protection. This is Nucleoid-associated protein BLi00029/BL02358 from Bacillus licheniformis (strain ATCC 14580 / DSM 13 / JCM 2505 / CCUG 7422 / NBRC 12200 / NCIMB 9375 / NCTC 10341 / NRRL NRS-1264 / Gibson 46).